Here is a 102-residue protein sequence, read N- to C-terminus: PqqA binding protein (102 aa).

Belongs to the PqqD family. In terms of assembly, monomer. Interacts with PqqE.

Its pathway is cofactor biosynthesis; pyrroloquinoline quinone biosynthesis. In terms of biological role, functions as a PqqA binding protein and presents PqqA to PqqE, in the pyrroloquinoline quinone (PQQ) biosynthetic pathway. The chain is PqqA binding protein from Rhodopseudomonas palustris (strain ATCC BAA-98 / CGA009).